The primary structure comprises 263 residues: Acyl-[acyl-carrier-protein]--UDP-N-acetylglucosamine O-acyltransferase (263 aa).

It belongs to the transferase hexapeptide repeat family. LpxA subfamily. As to quaternary structure, homotrimer.

The protein localises to the cytoplasm. It carries out the reaction a (3R)-hydroxyacyl-[ACP] + UDP-N-acetyl-alpha-D-glucosamine = a UDP-3-O-[(3R)-3-hydroxyacyl]-N-acetyl-alpha-D-glucosamine + holo-[ACP]. It functions in the pathway glycolipid biosynthesis; lipid IV(A) biosynthesis; lipid IV(A) from (3R)-3-hydroxytetradecanoyl-[acyl-carrier-protein] and UDP-N-acetyl-alpha-D-glucosamine: step 1/6. Involved in the biosynthesis of lipid A, a phosphorylated glycolipid that anchors the lipopolysaccharide to the outer membrane of the cell. The protein is Acyl-[acyl-carrier-protein]--UDP-N-acetylglucosamine O-acyltransferase of Caulobacter vibrioides (strain ATCC 19089 / CIP 103742 / CB 15) (Caulobacter crescentus).